A 389-amino-acid polypeptide reads, in one-letter code: Flap endonuclease 1 (389 aa).

Residues 1–105 (MGIKGLTALL…GELAKRKDKR (105 aa)) form an N-domain region. Residue aspartate 34 coordinates Mg(2+). Arginine 71 serves as a coordination point for DNA. Residues aspartate 87, glutamate 159, glutamate 161, aspartate 180, and aspartate 182 each contribute to the Mg(2+) site. The tract at residues 123–254 (EVEKLSKRTV…KTALKLIKEH (132 aa)) is I-domain. DNA is bound at residue glutamate 159. The DNA site is built by glycine 232 and aspartate 234. Mg(2+) is bound at residue aspartate 234. The interaction with PCNA stretch occupies residues 338 to 346 (SQNRLESFF). The interval 356–389 (IGKRKVEETKSGKGSKAGLNKKSKGVSGYKSKKT) is disordered. Residues 374–389 (LNKKSKGVSGYKSKKT) show a composition bias toward basic residues.

Belongs to the XPG/RAD2 endonuclease family. FEN1 subfamily. As to quaternary structure, interacts with PCNA. Three molecules of FEN1 bind to one PCNA trimer with each molecule binding to one PCNA monomer. PCNA stimulates the nuclease activity without altering cleavage specificity. Mg(2+) is required as a cofactor. Phosphorylated. Phosphorylation upon DNA damage induces relocalization to the nuclear plasma.

It localises to the nucleus. It is found in the nucleolus. The protein localises to the nucleoplasm. Its subcellular location is the mitochondrion. Its function is as follows. Structure-specific nuclease with 5'-flap endonuclease and 5'-3' exonuclease activities involved in DNA replication and repair. During DNA replication, cleaves the 5'-overhanging flap structure that is generated by displacement synthesis when DNA polymerase encounters the 5'-end of a downstream Okazaki fragment. It enters the flap from the 5'-end and then tracks to cleave the flap base, leaving a nick for ligation. Also involved in the long patch base excision repair (LP-BER) pathway, by cleaving within the apurinic/apyrimidinic (AP) site-terminated flap. Acts as a genome stabilization factor that prevents flaps from equilibrating into structures that lead to duplications and deletions. Also possesses 5'-3' exonuclease activity on nicked or gapped double-stranded DNA, and exhibits RNase H activity. Also involved in replication and repair of rDNA and in repairing mitochondrial DNA. The protein is Flap endonuclease 1 of Ostreococcus tauri.